The chain runs to 782 residues: Probable transcription factor claV (782 aa).

Disordered stretches follow at residues 1 to 37 (MPPR…VAKR), 49 to 128 (ALLT…GKDE), 156 to 180 (KSTS…NLTH), 717 to 745 (AGVG…PMPV), and 758 to 782 (GNTV…GGVD). The segment covering 70-79 (RKTKKKKKKG) has biased composition (basic residues). Residues 86 to 102 (QTPVMTEPPQSSRTSPN) show a composition bias toward polar residues. The segment covering 157–166 (STSAGASGSS) has biased composition (low complexity). The span at 723–740 (ADEDDEVEDDDEDEDEEV) shows a compositional bias: acidic residues.

Its subcellular location is the nucleus. The protein operates within secondary metabolite biosynthesis; terpenoid biosynthesis. Probable transcription factor; part of the gene cluster that mediates the biosynthesis of clavilactone A, a meroterpenoid that features a unique benzo-fused ten-membered carbocyclic ring unit with an alpha,beta-epoxy-gamma-lactone moiety, forming an intriguing 10/5/3 tricyclic nested skeleton. This Ampulloclitocybe clavipes (Club foot) protein is Probable transcription factor claV.